Reading from the N-terminus, the 200-residue chain is NAD(P)H dehydrogenase (quinone) (200 aa).

The Flavodoxin-like domain occupies 4–191 (VLVLYYSSYG…DIARYQGKHV (188 aa)). Residues 10 to 15 (SSYGHV) and 79 to 81 (TRF) each bind FMN. An NAD(+)-binding site is contributed by Tyr-12. Residue Trp-99 coordinates substrate. Residues 114-120 (STGTQHG) and His-135 each bind FMN.

The protein belongs to the WrbA family. The cofactor is FMN.

The enzyme catalyses a quinone + NADH + H(+) = a quinol + NAD(+). It carries out the reaction a quinone + NADPH + H(+) = a quinol + NADP(+). The protein is NAD(P)H dehydrogenase (quinone) of Burkholderia cenocepacia (strain HI2424).